The chain runs to 318 residues: Thioredoxin reductase (318 aa).

T36–Q43 provides a ligand contact to FAD. A disulfide bond links C136 and C139. D286–A295 serves as a coordination point for FAD.

This sequence belongs to the class-II pyridine nucleotide-disulfide oxidoreductase family. In terms of assembly, homodimer. The cofactor is FAD.

It is found in the cytoplasm. It carries out the reaction [thioredoxin]-dithiol + NADP(+) = [thioredoxin]-disulfide + NADPH + H(+). This chain is Thioredoxin reductase (trxB), found in Haemophilus influenzae (strain ATCC 51907 / DSM 11121 / KW20 / Rd).